The sequence spans 207 residues: Holliday junction branch migration complex subunit RuvA (207 aa).

Positions 1–64 (MIGLINGQVQ…EDAQLLYGFI (64 aa)) are domain I. The segment at 65 to 143 (DRKERDVFRQ…NIEVDSSHLE (79 aa)) is domain II. A flexible linker region spans residues 144–152 (FAMQPAPIS). Positions 153 to 207 (AEGSIIAEVEGALISLGYKEREAQQAIKAAKSNGETFADTQSLLKATLQQFQSFK) are domain III.

Belongs to the RuvA family. In terms of assembly, homotetramer. Forms an RuvA(8)-RuvB(12)-Holliday junction (HJ) complex. HJ DNA is sandwiched between 2 RuvA tetramers; dsDNA enters through RuvA and exits via RuvB. An RuvB hexamer assembles on each DNA strand where it exits the tetramer. Each RuvB hexamer is contacted by two RuvA subunits (via domain III) on 2 adjacent RuvB subunits; this complex drives branch migration. In the full resolvosome a probable DNA-RuvA(4)-RuvB(12)-RuvC(2) complex forms which resolves the HJ.

The protein resides in the cytoplasm. Its function is as follows. The RuvA-RuvB-RuvC complex processes Holliday junction (HJ) DNA during genetic recombination and DNA repair, while the RuvA-RuvB complex plays an important role in the rescue of blocked DNA replication forks via replication fork reversal (RFR). RuvA specifically binds to HJ cruciform DNA, conferring on it an open structure. The RuvB hexamer acts as an ATP-dependent pump, pulling dsDNA into and through the RuvAB complex. HJ branch migration allows RuvC to scan DNA until it finds its consensus sequence, where it cleaves and resolves the cruciform DNA. This Psychrobacter cryohalolentis (strain ATCC BAA-1226 / DSM 17306 / VKM B-2378 / K5) protein is Holliday junction branch migration complex subunit RuvA.